The sequence spans 404 residues: Caspase-1 (404 aa).

In terms of domain architecture, CARD spans 1–91; that stretch reads MADKVLKEKR…HLAGVLELST (91 aa). Positions 1–119 are excised as a propeptide; it reads MADKVLKEKR…PFPAPQTVQD (119 aa). The interval 111-132 is disordered; the sequence is FPAPQTVQDNPVKPASSEPRGS. Catalysis depends on residues His-237 and Cys-285. The propeptide occupies 298-316; the sequence is SVGPSGNSSLLAAEDFEYD. Position 302 is a phosphoserine (Ser-302).

Belongs to the peptidase C14A family. Heterotetramer that consists of two anti-parallel arranged heterodimers, each one formed by a 20 kDa (Caspase-1 subunit p20) and a 10 kDa (Caspase-1 subunit p10) subunit. May be a component of the inflammasome, a protein complex which also includes PYCARD, CARD8 and NLRP2 and whose function would be the activation of pro-inflammatory caspases. Component of the AIM2 PANoptosome complex, a multiprotein complex that drives inflammatory cell death (PANoptosis). Both the p10 and p20 subunits interact with MEFV. Interacts with CARD17P/INCA and CARD18. Interacts with SERPINB1; this interaction regulates CASP1 activity. In terms of assembly, heterotetramer that consists of two anti-parallel arranged heterodimers, each one formed by a 20 kDa (Caspase-1 subunit p20) and a 10 kDa (Caspase-1 subunit p10) subunit. Post-translationally, the two subunits are derived from the precursor sequence by an autocatalytic mechanism. In terms of processing, ubiquitinated via 'Lys-11'-linked polyubiquitination. Deubiquitinated by USP8.

It is found in the cytoplasm. Its subcellular location is the cell membrane. The enzyme catalyses Strict requirement for an Asp residue at position P1 and has a preferred cleavage sequence of Tyr-Val-Ala-Asp-|-.. Its function is as follows. Thiol protease involved in a variety of inflammatory processes by proteolytically cleaving other proteins, such as the precursors of the inflammatory cytokines interleukin-1 beta (IL1B) and interleukin 18 (IL18) as well as the pyroptosis inducer Gasdermin-D (GSDMD), into active mature peptides. Plays a key role in cell immunity as an inflammatory response initiator: once activated through formation of an inflammasome complex, it initiates a pro-inflammatory response through the cleavage of the two inflammatory cytokines IL1B and IL18, releasing the mature cytokines which are involved in a variety of inflammatory processes. Cleaves a tetrapeptide after an Asp residue at position P1. Also initiates pyroptosis, a programmed lytic cell death pathway, through cleavage of GSDMD. In contrast to cleavage of interleukin IL1B, recognition and cleavage of GSDMD is not strictly dependent on the consensus cleavage site but depends on an exosite interface on CASP1 that recognizes and binds the Gasdermin-D, C-terminal (GSDMD-CT) part. Cleaves and activates CASP7 in response to bacterial infection, promoting plasma membrane repair. Upon inflammasome activation, during DNA virus infection but not RNA virus challenge, controls antiviral immunity through the cleavage of CGAS, rendering it inactive. In apoptotic cells, cleaves SPHK2 which is released from cells and remains enzymatically active extracellularly. The polypeptide is Caspase-1 (CASP1) (Sus scrofa (Pig)).